The sequence spans 679 residues: Biosynthetic arginine decarboxylase (679 aa).

The disordered stretch occupies residues 1–43 (MKHRGQEEMGVESTATSDEVVKVPANGNKLEGKNHKQKKLLPT). Position 149 is an N6-(pyridoxal phosphate)lysine (Lys149). 331-341 (LDVGGGLGVDY) provides a ligand contact to substrate.

The protein belongs to the Orn/Lys/Arg decarboxylase class-II family. SpeA subfamily. Mg(2+) is required as a cofactor. Pyridoxal 5'-phosphate serves as cofactor.

It carries out the reaction L-arginine + H(+) = agmatine + CO2. In terms of biological role, catalyzes the biosynthesis of agmatine from arginine. The chain is Biosynthetic arginine decarboxylase from Nostoc sp. (strain PCC 7120 / SAG 25.82 / UTEX 2576).